Consider the following 136-residue polypeptide: S-protein homolog 17 (136 aa).

The N-terminal stretch at 1–22 is a signal peptide; sequence MKNLSIFMFVFSLCMFGHVSRA.

Belongs to the plant self-incompatibility (S1) protein family.

It localises to the secreted. This chain is S-protein homolog 17, found in Arabidopsis thaliana (Mouse-ear cress).